The primary structure comprises 136 residues: Histone H3.3C (136 aa).

Residues 1 to 42 (MARTKQTARKSTGGKAPRKQLVTKAAKKCAPATGGVKKPHRY) form a disordered region. Asymmetric dimethylarginine; by PRMT6 is present on arginine 3. The residue at position 4 (threonine 4) is a Phosphothreonine; by HASPIN. Allysine; alternate is present on lysine 5. Lysine 5 is subject to N6,N6,N6-trimethyllysine; alternate. Position 5 is an N6,N6-dimethyllysine; alternate (lysine 5). An N6-(2-hydroxyisobutyryl)lysine; alternate modification is found at lysine 5. Residue lysine 5 is modified to N6-acetyllysine; alternate. Lysine 5 carries the N6-methyllysine; alternate modification. At glutamine 6 the chain carries 5-glutamyl dopamine; alternate. Glutamine 6 bears the 5-glutamyl serotonin; alternate mark. Threonine 7 is modified (phosphothreonine; by PKC). Lysine 10 bears the N6-(2-hydroxyisobutyryl)lysine; alternate mark. Lysine 10 bears the N6-lactoyllysine; alternate mark. Residue lysine 10 is modified to N6-methylated lysine. Serine 11 bears the ADP-ribosylserine; alternate mark. Serine 11 is subject to Phosphoserine; alternate; by AURKB, AURKC, RPS6KA3, RPS6KA4 and RPS6KA5. The residue at position 12 (threonine 12) is a Phosphothreonine; by PKC. Lysine 15 carries the N6-(2-hydroxyisobutyryl)lysine; alternate modification. Position 15 is an N6-lactoyllysine; alternate (lysine 15). Lysine 15 bears the N6-acetyllysine mark. Lysine 15 carries the post-translational modification N6-glutaryllysine; alternate. Arginine 18 is modified (asymmetric dimethylarginine). N6-(2-hydroxyisobutyryl)lysine; alternate is present on residues lysine 19, lysine 24, lysine 28, and lysine 37. The residue at position 19 (lysine 19) is an N6-acetyllysine; alternate. Residues lysine 19, lysine 24, and lysine 28 each carry the N6-lactoyllysine; alternate modification. N6-glutaryllysine; alternate is present on residues lysine 19, lysine 24, and lysine 28. N6-butyryllysine; alternate occurs at positions 19 and 24. The residue at position 19 (lysine 19) is an N6-methylated lysine; alternate. An N6-acetyllysine modification is found at lysine 24. N6-acetyllysine; alternate occurs at positions 28 and 37. An N6-methylated lysine; alternate mark is found at lysine 28 and lysine 37. The residue at position 42 (tyrosine 42) is a Phosphotyrosine. Residue lysine 57 is modified to N6-(2-hydroxyisobutyryl)lysine; alternate. Lysine 57 is modified (N6-lactoyllysine; alternate). An N6-glutaryllysine; alternate modification is found at lysine 57. N6-succinyllysine; alternate is present on lysine 57. At serine 58 the chain carries Phosphoserine. 2 positions are modified to N6-(2-hydroxyisobutyryl)lysine; alternate: lysine 65 and lysine 80. Residues lysine 65 and lysine 80 each carry the N6-methylated lysine modification. At lysine 80 the chain carries N6-lactoyllysine; alternate. At lysine 80 the chain carries N6-glutaryllysine; alternate. Lysine 80 carries the N6-succinyllysine; alternate modification. Threonine 81 is modified (phosphothreonine). Lysine 116 and lysine 123 each carry N6-acetyllysine; alternate. 2 positions are modified to N6-glutaryllysine; alternate: lysine 116 and lysine 123. An N6-(2-hydroxyisobutyryl)lysine; alternate modification is found at lysine 123. Lysine 123 is subject to N6-methylated lysine; alternate. The residue at position 123 (lysine 123) is an N6-succinyllysine; alternate.

This sequence belongs to the histone H3 family. In terms of assembly, the nucleosome is a histone octamer containing two molecules each of H2A, H2B, H3 and H4 assembled in one H3-H4 heterotetramer and two H2A-H2B heterodimers. The octamer wraps approximately 147 bp of DNA. In terms of processing, acetylation is generally linked to gene activation. Acetylation on Lys-19 (H3K18ac) and Lys-24 (H3K24ac) favors methylation at Arg-18 (H3R17me). Acetylation at Lys-123 (H3K122ac) by EP300/p300 plays a central role in chromatin structure: localizes at the surface of the histone octamer and stimulates transcription, possibly by promoting nucleosome instability. Post-translationally, asymmetric dimethylation at Arg-18 (H3R17me2a) is linked to gene activation. Asymmetric dimethylation at Arg-3 (H3R2me2a) by PRMT6 is linked to gene repression and is mutually exclusive with H3 Lys-5 methylation (H3K4me2 and H3K4me3). H3R2me2a is present at the 3' of genes regardless of their transcription state and is enriched on inactive promoters, while it is absent on active promoters. Methylation at Lys-5 (H3K4me) and Lys-80 (H3K79me) are linked to gene activation. Methylation at Lys-5 (H3K4me) facilitates subsequent acetylation of H3 and H4. Methylation at Lys-80 (H3K79me) is associated with DNA double-strand break (DSB) responses and is a specific target for TP53BP1. Methylation at Lys-10 (H3K9me) and Lys-28 (H3K27me) are linked to gene repression. Methylation at Lys-10 (H3K9me) is a specific target for HP1 proteins (CBX1, CBX3 and CBX5) and prevents subsequent phosphorylation at Ser-11 (H3S10ph) and acetylation of H3 and H4. Methylation at Lys-5 (H3K4me) and Lys-80 (H3K79me) require preliminary monoubiquitination of H2B at 'Lys-120'. In terms of processing, phosphorylated at Thr-4 (H3T3ph) by HASPIN during prophase and dephosphorylated during anaphase. Phosphorylation at Ser-11 (H3S10ph) by aurkb is crucial for chromosome condensation and cell-cycle progression during mitosis and meiosis. In addition phosphorylation at Ser-11 (H3S10ph) by rps6ka4 and rps6ka5 is important during interphase because it enables the transcription of genes following external stimulation, like mitogens, stress, growth factors or UV irradiation and result in the activation of genes, such as c-fos and c-jun. Phosphorylation at Ser-11 (H3S10ph), which is linked to gene activation, prevents methylation at Lys-10 (H3K9me) but facilitates acetylation of H3 and H4. Phosphorylation at Ser-11 (H3S10ph) by aurkb mediates the dissociation of HP1 proteins (cbx1, cbx3 and cbx5) from heterochromatin. Phosphorylation at Ser-11 (H3S10ph) is also an essential regulatory mechanism for neoplastic cell transformation. Phosphorylation at Thr-7 (H3T6ph) by prkcb is a specific tag for epigenetic transcriptional activation that prevents demethylation of Lys-5 (H3K4me) by lsd1/kdm1a. At centromeres, specifically phosphorylated at Thr-12 (H3T11ph) from prophase to early anaphase, by DAPK3 and PKN1. Phosphorylation at Thr-12 (H3T11ph) by PKN1 or isoform M2 of PKM (PKM2) is a specific tag for epigenetic transcriptional activation that promotes demethylation of Lys-10 (H3K9me) by kdm4c/jmjd2c. Phosphorylation at Tyr-42 (H3Y41ph) by jak2 promotes exclusion of cbx5 (HP1 alpha) from chromatin. Post-translationally, lysine deamination at Lys-5 (H3K4all) to form allysine only takes place on H3K4me3 and results in gene repression. Butyrylation of histones marks active promoters and competes with histone acetylation. It is present during late spermatogenesis. In terms of processing, succinylation at Lys-80 (H3K79succ) by KAT2A takes place with a maximum frequency around the transcription start sites of genes. It gives a specific tag for epigenetic transcription activation. Desuccinylation at Lys-123 (H3K122succ) by SIRT7 in response to DNA damage promotes chromatin condensation and double-strand breaks (DSBs) repair. Post-translationally, serine ADP-ribosylation constitutes the primary form of ADP-ribosylation of proteins in response to DNA damage. Serine ADP-ribosylation at Ser-11 (H3S10ADPr) is mutually exclusive with phosphorylation at Ser-11 (H3S10ph) and impairs acetylation at Lys-10 (H3K9ac).

It is found in the nucleus. It localises to the chromosome. Core component of nucleosome. Nucleosomes wrap and compact DNA into chromatin, limiting DNA accessibility to the cellular machineries which require DNA as a template. Histones thereby play a central role in transcription regulation, DNA repair, DNA replication and chromosomal stability. DNA accessibility is regulated via a complex set of post-translational modifications of histones, also called histone code, and nucleosome remodeling. This Xenopus laevis (African clawed frog) protein is Histone H3.3C (h3-5).